The chain runs to 629 residues: MERSSRADLISEDSHPARTHTCGDLRAEDNGEAVVLKGWVDTRRDHGGLVFVDLRDRYGLTQVVFSPQDNQTAYEVAGQLRREDVISVQGTVRPRGEEAVNPDLPTGAIEVSADDLAVLNTSETPPFVVSAHEERQMNTNEDLRLAHRYLDLRRPDLQENIELRHRLYQTTHRYFDAHDFLEVETPVLMKSTPEGARDFLVPSRLHPGRFYALPQSPQTYKQLLMVGGLDRYVQIVKCFRDEDLRADRQPEFTQIDVEMTFATEEQVYELTEGLMADLWDTLEDTTLETPFPRMTYDEALRTYGTDKPDLRFDLELHDVSDCFAGSGFRVFDSIVDDGGHIVALRVPGEGDRGRAAMDRLEDHVTDEIGAAGLIYFQLPSDGSGIEQNLSSDALPHEYGRAAAEQVGAEAGDLVLTLAGHSPTVFEQAGALRLHMGEELGLRPPADEGDDAFLWVTDFPLMEYDEEAGRPVSMHHPFTAPHPDDLDRLDEDPTQVQARAYDLVLNGNEIGGGSIRIHNHETQMQVFDVLGIDEEEAQDRFGFLLDALRYGAPPHGGIALGLDRLVMLLAGADSLRDVIAFPKTQSGKEPMVKSPDWVDPEQLETLALRLDLPPDVEPPARIAQRKRLAS.

The interval 1–24 is disordered; sequence MERSSRADLISEDSHPARTHTCGD. Basic and acidic residues predominate over residues 12–24; sequence EDSHPARTHTCGD. E194 lines the L-aspartate pocket. The aspartate stretch occupies residues 218 to 221; sequence QTYK. R240 lines the L-aspartate pocket. ATP is bound by residues 240-242 and Q249; that span reads RDE. Residue H474 coordinates L-aspartate. E508 is a binding site for ATP. Residue R515 participates in L-aspartate binding. ATP is bound at residue 560 to 563; it reads GLDR.

Belongs to the class-II aminoacyl-tRNA synthetase family. Type 1 subfamily. As to quaternary structure, homodimer.

The protein resides in the cytoplasm. It carries out the reaction tRNA(Asx) + L-aspartate + ATP = L-aspartyl-tRNA(Asx) + AMP + diphosphate. Its function is as follows. Aspartyl-tRNA synthetase with relaxed tRNA specificity since it is able to aspartylate not only its cognate tRNA(Asp) but also tRNA(Asn). Reaction proceeds in two steps: L-aspartate is first activated by ATP to form Asp-AMP and then transferred to the acceptor end of tRNA(Asp/Asn). The chain is Aspartate--tRNA(Asp/Asn) ligase from Salinibacter ruber (strain DSM 13855 / M31).